The primary structure comprises 189 residues: Glutathione-dependent formaldehyde-activating enzyme (189 aa).

Residues 20 to 167 (FAGGTLVCKC…LKELGLEPYD (148 aa)) enclose the CENP-V/GFA domain. Positions 27, 29, 48, 50, 53, 95, and 98 each coordinate Zn(2+).

The protein belongs to the Gfa family. It depends on Zn(2+) as a cofactor.

It catalyses the reaction S-(hydroxymethyl)glutathione = glutathione + formaldehyde. The protein operates within one-carbon metabolism; formaldehyde degradation; formate from formaldehyde (glutathione route): step 1/3. Its function is as follows. Catalyzes the condensation of formaldehyde and glutathione to S-hydroxymethylglutathione. The polypeptide is Glutathione-dependent formaldehyde-activating enzyme (Rhodopseudomonas palustris (strain BisA53)).